We begin with the raw amino-acid sequence, 544 residues long: Chaperonin GroEL 1 (544 aa).

Residues 29-32 (TLGP), Lys50, 86-90 (DGTTT), Gly414, and Asp494 each bind ATP.

Belongs to the chaperonin (HSP60) family. Forms a cylinder of 14 subunits composed of two heptameric rings stacked back-to-back. Interacts with the co-chaperonin GroES.

It is found in the cytoplasm. The catalysed reaction is ATP + H2O + a folded polypeptide = ADP + phosphate + an unfolded polypeptide.. Functionally, together with its co-chaperonin GroES, plays an essential role in assisting protein folding. The GroEL-GroES system forms a nano-cage that allows encapsulation of the non-native substrate proteins and provides a physical environment optimized to promote and accelerate protein folding. The sequence is that of Chaperonin GroEL 1 from Psychromonas ingrahamii (strain DSM 17664 / CCUG 51855 / 37).